The primary structure comprises 103 residues: N(4)-acetylcytidine amidohydrolase (103 aa).

Positions 6–101 constitute an ASCH domain; sequence ITFFQRFQDD…QTQFYVIEFK (96 aa). Catalysis depends on K21, which acts as the Proton acceptor. T24 functions as the Nucleophile in the catalytic mechanism. Residue E74 is the Proton donor of the active site.

This sequence belongs to the N(4)-acetylcytidine amidohydrolase family.

The enzyme catalyses N(4)-acetylcytidine + H2O = cytidine + acetate + H(+). It carries out the reaction N(4)-acetyl-2'-deoxycytidine + H2O = 2'-deoxycytidine + acetate + H(+). It catalyses the reaction N(4)-acetylcytosine + H2O = cytosine + acetate + H(+). Catalyzes the hydrolysis of N(4)-acetylcytidine (ac4C). This Escherichia coli O127:H6 (strain E2348/69 / EPEC) protein is N(4)-acetylcytidine amidohydrolase (yqfB).